A 298-amino-acid chain; its full sequence is Quinolinate synthase (298 aa).

Iminosuccinate contacts are provided by His19 and Ser36. Residue Cys81 coordinates [4Fe-4S] cluster. Residues 107-109 and Ser124 each bind iminosuccinate; that span reads YVN. Residue Cys168 coordinates [4Fe-4S] cluster. Iminosuccinate-binding positions include 193 to 195 and Thr210; that span reads HPE. Position 254 (Cys254) interacts with [4Fe-4S] cluster.

It belongs to the quinolinate synthase family. Type 2 subfamily. Requires [4Fe-4S] cluster as cofactor.

The protein localises to the cytoplasm. It catalyses the reaction iminosuccinate + dihydroxyacetone phosphate = quinolinate + phosphate + 2 H2O + H(+). The protein operates within cofactor biosynthesis; NAD(+) biosynthesis; quinolinate from iminoaspartate: step 1/1. In terms of biological role, catalyzes the condensation of iminoaspartate with dihydroxyacetone phosphate to form quinolinate. The chain is Quinolinate synthase from Thermotoga sp. (strain RQ2).